The primary structure comprises 409 residues: Pentatricopeptide repeat-containing protein At1g31790 (409 aa).

PPR repeat units lie at residues 87-121 (NEDI…SIRP), 122-152 (TITF…MPHR), 153-187 (DFHS…SQKG), 192-226 (PSWI…GFID), 229-259 (DSYL…LSNA), 260-294 (NTVA…GIKK), 295-330 (NVSV…GFES), 331-361 (DCLI…SKDE), and 363-397 (SVSC…GIKA).

The protein belongs to the PPR family. PCMP-A subfamily.

This chain is Pentatricopeptide repeat-containing protein At1g31790 (PCMP-A1), found in Arabidopsis thaliana (Mouse-ear cress).